A 54-amino-acid chain; its full sequence is MKIFFAILLILAVCSMAIWTVNGTPFAIKCATDADCSRKCPGNPSCRNGFCACT.

Residues 1–23 (MKIFFAILLILAVCSMAIWTVNG) form the signal peptide.

The protein belongs to the short scorpion toxin superfamily. Potassium channel inhibitor family. Alpha-KTx 14 subfamily. In terms of processing, probably has three disulfide bridges. In terms of tissue distribution, expressed by the venom gland.

It localises to the secreted. Its function is as follows. Potential blocker of potassium channels. The polypeptide is Potassium channel toxin alpha-KTx 14.1 (Olivierus martensii (Manchurian scorpion)).